A 448-amino-acid polypeptide reads, in one-letter code: Fibulin-5 (448 aa).

An N-terminal signal peptide occupies residues 1–23 (MPGLKRILTVTILALWLPHPGNA). Positions 42-82 (DIDECRTIPEACRGDMMCVNQNGGYLCIPRTNPVYRGPYSN) constitute an EGF-like 1; calcium-binding domain. 17 disulfide bridges follow: Cys46/Cys59, Cys53/Cys68, Cys131/Cys144, Cys138/Cys153, Cys155/Cys166, Cys172/Cys181, Cys177/Cys190, Cys192/Cys205, Cys211/Cys221, Cys217/Cys230, Cys232/Cys245, Cys251/Cys262, Cys258/Cys271, Cys273/Cys286, Cys292/Cys305, Cys299/Cys314, and Cys320/Cys332. Residues 54–56 (RGD) carry the Cell attachment site motif. Residues 127 to 167 (DVDECATDSHQCNPTQICINTEGGYTCSCTDGYWLLEGQCL) form the EGF-like 2; calcium-binding domain. Positions 168–206 (DIDECRYGYCQQLCANVPGSYSCTCNPGFTLNDDGRSCQ) constitute an EGF-like 3; calcium-binding domain. The region spanning 207–246 (DVNECETENPCVQTCVNTYGSFICRCDPGYELEEDGIHCS) is the EGF-like 4; calcium-binding domain. Positions 245-448 (CSDMDECSFS…LRIYVSQYPF (204 aa)) are interaction with LOXL1. The region spanning 247-287 (DMDECSFSEFLCQHECVNQPGSYFCSCPPGYVLLEDNRSCQ) is the EGF-like 5; calcium-binding domain. 2 N-linked (GlcNAc...) asparagine glycosylation sites follow: Asn283 and Asn296. Positions 288 to 333 (DINECEHRNHTCTPLQTCYNLQGGFKCIDPIVCEEPYLLIGDNRCM) constitute an EGF-like 6; calcium-binding domain.

The protein belongs to the fibulin family. As to quaternary structure, homodimer. Monomer, homodimerizes in presence of Ca(2+). Interacts with ELN. Interacts (via N-terminus) with the integrins ITGAV/ITGB3, ITGAV/ITGB5 and ITGA9/ITGB1. Interacts with FBN1 (via N-terminal domain). Forms a ternary complex with ELN and FBN1. Interacts with EFEMP2 with moderate affinity. Interacts with LOXL1. In terms of processing, N-glycosylated.

It is found in the secreted. The protein localises to the extracellular space. It localises to the extracellular matrix. Essential for elastic fiber formation, is involved in the assembly of continuous elastin (ELN) polymer and promotes the interaction of microfibrils and ELN. Stabilizes and organizes elastic fibers in the skin, lung and vasculature. Promotes adhesion of endothelial cells through interaction of integrins and the RGD motif. Vascular ligand for integrin receptors which may play a role in vascular development and remodeling. May act as an adapter that mediates the interaction between FBN1 and ELN. The sequence is that of Fibulin-5 (Fbln5) from Rattus norvegicus (Rat).